Consider the following 109-residue polypeptide: Thiosulfate sulfurtransferase GlpE (109 aa).

The Rhodanese domain maps to 17-105 (KEGKTALVDI…WARSYPQDIT (89 aa)). Catalysis depends on C65, which acts as the Cysteine persulfide intermediate.

Belongs to the GlpE family.

Its subcellular location is the cytoplasm. The catalysed reaction is thiosulfate + hydrogen cyanide = thiocyanate + sulfite + 2 H(+). It catalyses the reaction thiosulfate + [thioredoxin]-dithiol = [thioredoxin]-disulfide + hydrogen sulfide + sulfite + 2 H(+). In terms of biological role, transferase that catalyzes the transfer of sulfur from thiosulfate to thiophilic acceptors such as cyanide or dithiols. May function in a CysM-independent thiosulfate assimilation pathway by catalyzing the conversion of thiosulfate to sulfite, which can then be used for L-cysteine biosynthesis. This is Thiosulfate sulfurtransferase GlpE from Yersinia pestis bv. Antiqua (strain Antiqua).